The chain runs to 731 residues: 1,4-alpha-glucan branching enzyme GlgB (731 aa).

The active-site Nucleophile is the Asp-409. Glu-462 (proton donor) is an active-site residue.

This sequence belongs to the glycosyl hydrolase 13 family. GlgB subfamily. In terms of assembly, monomer.

It catalyses the reaction Transfers a segment of a (1-&gt;4)-alpha-D-glucan chain to a primary hydroxy group in a similar glucan chain.. It functions in the pathway glycan biosynthesis; glycogen biosynthesis. Functionally, catalyzes the formation of the alpha-1,6-glucosidic linkages in glycogen by scission of a 1,4-alpha-linked oligosaccharide from growing alpha-1,4-glucan chains and the subsequent attachment of the oligosaccharide to the alpha-1,6 position. In Dickeya chrysanthemi (Pectobacterium chrysanthemi), this protein is 1,4-alpha-glucan branching enzyme GlgB (glgB).